We begin with the raw amino-acid sequence, 449 residues long: tRNA (guanine(37)-N(1))-methyltransferase (449 aa).

Residues His216, 254 to 255 (DL), 282 to 283 (DG), and Asn345 each bind S-adenosyl-L-methionine.

This sequence belongs to the class I-like SAM-binding methyltransferase superfamily. TRM5/TYW2 family. In terms of assembly, monomer.

It is found in the mitochondrion matrix. The protein resides in the nucleus. It localises to the cytoplasm. The enzyme catalyses guanosine(37) in tRNA + S-adenosyl-L-methionine = N(1)-methylguanosine(37) in tRNA + S-adenosyl-L-homocysteine + H(+). Its function is as follows. Specifically methylates the N1 position of guanosine-37 in various cytoplasmic and mitochondrial tRNAs. Methylation is not dependent on the nature of the nucleoside 5' of the target nucleoside. This is the first step in the biosynthesis of wybutosine (yW), a modified base adjacent to the anticodon of tRNAs and required for accurate decoding. The protein is tRNA (guanine(37)-N(1))-methyltransferase of Candida albicans (strain SC5314 / ATCC MYA-2876) (Yeast).